Here is a 649-residue protein sequence, read N- to C-terminus: Probable ADP-ribosylation factor GTPase-activating protein AGD14 (649 aa).

One can recognise an Arf-GAP domain in the interval 12 to 130; it reads EKIIRGLMKL…KYAGANDADK (119 aa). The segment at 27–50 adopts a C4-type zinc-finger fold; sequence CINCNSLGPQYVCTTFWTFVCMAC. 4 disordered regions span residues 124-159, 209-279, 294-316, and 366-391; these read GAND…QSPP, FSNE…VRSV, LGEA…SNHV, and FTPA…SAPK. Residues 127–146 show a composition bias toward basic and acidic residues; the sequence is DADKPSKDSQDHVSSEDMTR. Positions 150-159 are enriched in low complexity; sequence SYHSYSQSPP. Polar residues-rich tracts occupy residues 248–257, 269–279, 300–315, and 366–385; these read PQFQHSNAPP, RTTSSGSVRSV, ESRQ…TSNH, and FTPA…SRPS.

Functionally, GTPase-activating protein (GAP) for ADP ribosylation factor (ARF). This Arabidopsis thaliana (Mouse-ear cress) protein is Probable ADP-ribosylation factor GTPase-activating protein AGD14 (AGD14).